The sequence spans 601 residues: ATP-dependent lipid A-core flippase (601 aa).

5 helical membrane-spanning segments follow: residues 33 to 53, 72 to 92, 158 to 178, 255 to 275, and 283 to 303; these read CVAV…AKLI, VSLM…LSEY, VIGL…VFLV, LGGG…LYVV, and TITP…LSPI. The ABC transmembrane type-1 domain occupies 34 to 315; the sequence is VAVVAMIAYA…LSQVVSVMQR (282 aa). Positions 347 to 583 constitute an ABC transporter domain; sequence IEYRHVSLVY…RGGYADLYAM (237 aa). An ATP-binding site is contributed by 381–388; sequence GQSGSGKT.

It belongs to the ABC transporter superfamily. Lipid exporter (TC 3.A.1.106) family. As to quaternary structure, homodimer.

It is found in the cell inner membrane. The catalysed reaction is ATP + H2O + lipid A-core oligosaccharideSide 1 = ADP + phosphate + lipid A-core oligosaccharideSide 2.. Involved in lipopolysaccharide (LPS) biosynthesis. Translocates lipid A-core from the inner to the outer leaflet of the inner membrane. Transmembrane domains (TMD) form a pore in the inner membrane and the ATP-binding domain (NBD) is responsible for energy generation. The sequence is that of ATP-dependent lipid A-core flippase from Methylococcus capsulatus (strain ATCC 33009 / NCIMB 11132 / Bath).